Reading from the N-terminus, the 499-residue chain is Probable cytosol aminopeptidase (499 aa).

Mn(2+) is bound by residues lysine 264 and aspartate 269. Residue lysine 276 is part of the active site. Mn(2+)-binding residues include aspartate 287, aspartate 346, and glutamate 348. Arginine 350 is an active-site residue.

It belongs to the peptidase M17 family. The cofactor is Mn(2+).

It localises to the cytoplasm. The enzyme catalyses Release of an N-terminal amino acid, Xaa-|-Yaa-, in which Xaa is preferably Leu, but may be other amino acids including Pro although not Arg or Lys, and Yaa may be Pro. Amino acid amides and methyl esters are also readily hydrolyzed, but rates on arylamides are exceedingly low.. It catalyses the reaction Release of an N-terminal amino acid, preferentially leucine, but not glutamic or aspartic acids.. Presumably involved in the processing and regular turnover of intracellular proteins. Catalyzes the removal of unsubstituted N-terminal amino acids from various peptides. The chain is Probable cytosol aminopeptidase from Rhodopseudomonas palustris (strain BisB18).